The sequence spans 389 residues: Phospho-N-acetylmuramoyl-pentapeptide-transferase (389 aa).

A run of 11 helical transmembrane segments spans residues 25–45 (RAVM…PWVI), 74–94 (MGGV…CDWG), 97–117 (FIWV…VDDY), 134–154 (FFWQ…SVSE), 167–187 (WIEG…VPFF), 190–210 (VSYP…IVGS), 222–242 (GLVI…AYVM), 259–279 (AGEL…FLWF), 286–306 (VFMG…VAVI), 311–331 (IVLF…MLQV), and 366–386 (QVTV…LSSL).

It belongs to the glycosyltransferase 4 family. MraY subfamily. The cofactor is Mg(2+).

It localises to the cell inner membrane. It carries out the reaction UDP-N-acetyl-alpha-D-muramoyl-L-alanyl-gamma-D-glutamyl-meso-2,6-diaminopimeloyl-D-alanyl-D-alanine + di-trans,octa-cis-undecaprenyl phosphate = di-trans,octa-cis-undecaprenyl diphospho-N-acetyl-alpha-D-muramoyl-L-alanyl-D-glutamyl-meso-2,6-diaminopimeloyl-D-alanyl-D-alanine + UMP. Its pathway is cell wall biogenesis; peptidoglycan biosynthesis. Catalyzes the initial step of the lipid cycle reactions in the biosynthesis of the cell wall peptidoglycan: transfers peptidoglycan precursor phospho-MurNAc-pentapeptide from UDP-MurNAc-pentapeptide onto the lipid carrier undecaprenyl phosphate, yielding undecaprenyl-pyrophosphoryl-MurNAc-pentapeptide, known as lipid I. This chain is Phospho-N-acetylmuramoyl-pentapeptide-transferase, found in Cupriavidus metallidurans (strain ATCC 43123 / DSM 2839 / NBRC 102507 / CH34) (Ralstonia metallidurans).